A 287-amino-acid chain; its full sequence is Homoserine kinase (287 aa).

78 to 88 (PLSRGLGSSST) lines the ATP pocket.

The protein belongs to the GHMP kinase family. Homoserine kinase subfamily.

The protein localises to the cytoplasm. It carries out the reaction L-homoserine + ATP = O-phospho-L-homoserine + ADP + H(+). Its pathway is amino-acid biosynthesis; L-threonine biosynthesis; L-threonine from L-aspartate: step 4/5. In terms of biological role, catalyzes the ATP-dependent phosphorylation of L-homoserine to L-homoserine phosphate. The chain is Homoserine kinase from Lactobacillus gasseri (strain ATCC 33323 / DSM 20243 / BCRC 14619 / CIP 102991 / JCM 1131 / KCTC 3163 / NCIMB 11718 / NCTC 13722 / AM63).